The following is a 309-amino-acid chain: Probable manganese-dependent inorganic pyrophosphatase (309 aa).

Residues His-9, Asp-13, Asp-15, Asp-75, His-97, and Asp-149 each contribute to the Mn(2+) site.

The protein belongs to the PPase class C family. The cofactor is Mn(2+).

It is found in the cytoplasm. It catalyses the reaction diphosphate + H2O = 2 phosphate + H(+). This Lactiplantibacillus plantarum (strain ATCC BAA-793 / NCIMB 8826 / WCFS1) (Lactobacillus plantarum) protein is Probable manganese-dependent inorganic pyrophosphatase.